A 1457-amino-acid polypeptide reads, in one-letter code: Eye-specific diacylglycerol kinase (1457 aa).

Disordered regions lie at residues M1–A123, R136–I177, and Y207–T339. Composition is skewed to low complexity over residues S22 to T62, S98 to S115, and D141 to T154. Over residues A214–E253 the composition is skewed to acidic residues. Basic and acidic residues predominate over residues D254–D266. The span at R294–T303 shows a compositional bias: basic residues. Phorbol-ester/DAG-type zinc fingers lie at residues H591–C641 and H661–C724. Residues N758–A799 form a disordered region. The span at G763–G778 shows a compositional bias: gly residues. A compositionally biased stretch (basic residues) spans K779 to K789. A DAGKc domain is found at P808–P944. The disordered stretch occupies residues T1264–Q1302. 4 ANK repeats span residues Q1320–S1349, N1353–I1382, L1389–T1418, and G1422–V1451.

It belongs to the eukaryotic diacylglycerol kinase family. As to expression, expressed specifically in adult eye.

The protein resides in the membrane. The enzyme catalyses a 1,2-diacyl-sn-glycerol + ATP = a 1,2-diacyl-sn-glycero-3-phosphate + ADP + H(+). In terms of biological role, required for the maintenance of phospholipid turnover within the photoreceptor. This Drosophila melanogaster (Fruit fly) protein is Eye-specific diacylglycerol kinase (rdgA).